The following is a 195-amino-acid chain: Holliday junction branch migration complex subunit RuvA (195 aa).

The tract at residues 1-61 (MYEYFEGIIS…DTGITLYGFQ (61 aa)) is domain I. Residues 62 to 140 (DQDDKGLFLK…DYVARLDKPE (79 aa)) form a domain II region. Residues 141-146 (NGEEIS) form a flexible linker region. The domain III stretch occupies residues 146 to 195 (SPALNDALLALIALGYTQKEVDRITPKLVEIEADTADQYIKKGLALLLKK).

The protein belongs to the RuvA family. Homotetramer. Forms an RuvA(8)-RuvB(12)-Holliday junction (HJ) complex. HJ DNA is sandwiched between 2 RuvA tetramers; dsDNA enters through RuvA and exits via RuvB. An RuvB hexamer assembles on each DNA strand where it exits the tetramer. Each RuvB hexamer is contacted by two RuvA subunits (via domain III) on 2 adjacent RuvB subunits; this complex drives branch migration. In the full resolvosome a probable DNA-RuvA(4)-RuvB(12)-RuvC(2) complex forms which resolves the HJ.

The protein resides in the cytoplasm. Functionally, the RuvA-RuvB-RuvC complex processes Holliday junction (HJ) DNA during genetic recombination and DNA repair, while the RuvA-RuvB complex plays an important role in the rescue of blocked DNA replication forks via replication fork reversal (RFR). RuvA specifically binds to HJ cruciform DNA, conferring on it an open structure. The RuvB hexamer acts as an ATP-dependent pump, pulling dsDNA into and through the RuvAB complex. HJ branch migration allows RuvC to scan DNA until it finds its consensus sequence, where it cleaves and resolves the cruciform DNA. The chain is Holliday junction branch migration complex subunit RuvA from Lactobacillus acidophilus (strain ATCC 700396 / NCK56 / N2 / NCFM).